The primary structure comprises 288 residues: Phosphatidylglycerol--prolipoprotein diacylglyceryl transferase (288 aa).

A run of 4 helical transmembrane segments spans residues 8 to 28, 49 to 69, 79 to 99, and 109 to 129; these read IGPI…FVGI, AFVA…LFNL, ILAV…GIAG, and INPL…QAIG. Position 130 (arginine 130) interacts with a 1,2-diacyl-sn-glycero-3-phospho-(1'-sn-glycerol). Helical transmembrane passes span 203–223, 232–252, and 259–279; these read PAML…WFIL, GYMW…VSFF, and FFNF…SIFF.

It belongs to the Lgt family.

The protein resides in the cell inner membrane. It carries out the reaction L-cysteinyl-[prolipoprotein] + a 1,2-diacyl-sn-glycero-3-phospho-(1'-sn-glycerol) = an S-1,2-diacyl-sn-glyceryl-L-cysteinyl-[prolipoprotein] + sn-glycerol 1-phosphate + H(+). Its pathway is protein modification; lipoprotein biosynthesis (diacylglyceryl transfer). Functionally, catalyzes the transfer of the diacylglyceryl group from phosphatidylglycerol to the sulfhydryl group of the N-terminal cysteine of a prolipoprotein, the first step in the formation of mature lipoproteins. In Fusobacterium nucleatum subsp. nucleatum (strain ATCC 25586 / DSM 15643 / BCRC 10681 / CIP 101130 / JCM 8532 / KCTC 2640 / LMG 13131 / VPI 4355), this protein is Phosphatidylglycerol--prolipoprotein diacylglyceryl transferase.